Here is a 392-residue protein sequence, read N- to C-terminus: Phosphoprotein (392 aa).

Disordered stretches follow at residues 61–107 (ESTN…GLDS) and 152–182 (PIATSSPIDFKRGAGIPAGSIEGSTQSDGWE). A multimerization region spans residues 217–280 (LNVNEILNTV…ITTVKIMDPG (64 aa)). Positions 219 to 246 (VNEILNTVRNLDSRMNQLETKVDRILSS) form a coiled coil.

This sequence belongs to the rubulavirus/avulavirus P protein family. As to quaternary structure, homotetramer. Interacts (via multimerization domain) with polymerase L; this interaction forms the polymerase L-P complex. Interacts (via N-terminus) with N0 (via Ncore); this interaction allows P to chaperon N0 to avoid N polymerization before encapsidation. Interacts (via C-terminus) with N-RNA template; this interaction positions the polymerase on the template for both transcription and replication.

In terms of biological role, essential cofactor of the RNA polymerase L that plays a central role in the transcription and replication by forming the polymerase complex with RNA polymerase L and recruiting L to the genomic N-RNA template for RNA synthesis. Also plays a central role in the encapsidation of nascent RNA chains by forming the encapsidation complex with the nucleocapsid protein N (N-P complex). Acts as a chaperone for newly synthesized free N protein, so-called N0, allowing encapsidation of nascent RNA chains during replication. The nucleoprotein protein N prevents excessive phosphorylation of P, which leads to down-regulation of viral transcription/ replication. Participates, together with N, in the formation of viral factories (viroplasms), which are large inclusions in the host cytoplasm where replication takes place. The polypeptide is Phosphoprotein (P/V) (Canis lupus familiaris (Dog)).